The following is a 142-amino-acid chain: Small heat shock protein IbpB (142 aa).

The region spanning 25–136 is the sHSP domain; it reads GQEPQGFPPY…QPQRIAIGTT (112 aa).

Belongs to the small heat shock protein (HSP20) family. As to quaternary structure, homodimer. Forms homomultimers of about 100-150 subunits at optimal growth temperatures. Conformation changes to oligomers at high temperatures or high ionic concentrations. The decrease in size of the multimers is accompanied by an increase in chaperone activity.

It localises to the cytoplasm. Associates with aggregated proteins, together with IbpA, to stabilize and protect them from irreversible denaturation and extensive proteolysis during heat shock and oxidative stress. Aggregated proteins bound to the IbpAB complex are more efficiently refolded and reactivated by the ATP-dependent chaperone systems ClpB and DnaK/DnaJ/GrpE. Its activity is ATP-independent. The chain is Small heat shock protein IbpB from Serratia proteamaculans (strain 568).